Consider the following 1285-residue polypeptide: Dermonecrotic toxin (1285 aa).

Residues 402–422 (MLVPAVGIPINFALSATALGL) traverse the membrane as a helical segment.

The protein localises to the cytoplasm. It localises to the secreted. Its subcellular location is the host membrane. In terms of biological role, this is a dermonecrotic toxin. This osteolytic toxin, induces bone resorption. Potent mitogen. This toxin is associated with the severe progressive form of the atrophic rhinitis, a major respiratory disease in pigs. This chain is Dermonecrotic toxin (toxA), found in Pasteurella multocida.